We begin with the raw amino-acid sequence, 466 residues long: Uronate isomerase (466 aa).

This sequence belongs to the metallo-dependent hydrolases superfamily. Uronate isomerase family.

It carries out the reaction D-glucuronate = D-fructuronate. The enzyme catalyses aldehydo-D-galacturonate = keto-D-tagaturonate. It functions in the pathway carbohydrate metabolism; pentose and glucuronate interconversion. This is Uronate isomerase from Brucella canis (strain ATCC 23365 / NCTC 10854 / RM-666).